Here is a 427-residue protein sequence, read N- to C-terminus: Serine--tRNA ligase (427 aa).

T235–E237 contributes to the L-serine binding site. ATP-binding positions include R266–E268 and V282. E289 serves as a coordination point for L-serine. E353–S356 is an ATP binding site. Position 389 (S389) interacts with L-serine.

It belongs to the class-II aminoacyl-tRNA synthetase family. Type-1 seryl-tRNA synthetase subfamily. In terms of assembly, homodimer. The tRNA molecule binds across the dimer.

Its subcellular location is the cytoplasm. The enzyme catalyses tRNA(Ser) + L-serine + ATP = L-seryl-tRNA(Ser) + AMP + diphosphate + H(+). The catalysed reaction is tRNA(Sec) + L-serine + ATP = L-seryl-tRNA(Sec) + AMP + diphosphate + H(+). The protein operates within aminoacyl-tRNA biosynthesis; selenocysteinyl-tRNA(Sec) biosynthesis; L-seryl-tRNA(Sec) from L-serine and tRNA(Sec): step 1/1. In terms of biological role, catalyzes the attachment of serine to tRNA(Ser). Is also able to aminoacylate tRNA(Sec) with serine, to form the misacylated tRNA L-seryl-tRNA(Sec), which will be further converted into selenocysteinyl-tRNA(Sec). This chain is Serine--tRNA ligase, found in Chloroherpeton thalassium (strain ATCC 35110 / GB-78).